The chain runs to 289 residues: Fatty acid elongase 1 (289 aa).

7 helical membrane-spanning segments follow: residues 22 to 42, 72 to 92, 123 to 143, 152 to 172, 177 to 197, 208 to 228, and 251 to 271; these read VVGY…KLFA, AMVL…STVT, FWIG…IFLV, FLHW…YCVG, IWVA…FAIA, WAPY…FVTL, and LLMY…AHVL. A HxxHH motif motif is present at residues 154-158; that stretch reads HWYHH. Histidine 157 (nucleophile) is an active-site residue. Asparagine 282 carries N-linked (GlcNAc...) asparagine glycosylation.

It belongs to the ELO family.

It localises to the endoplasmic reticulum membrane. The enzyme catalyses an acyl-CoA + malonyl-CoA + H(+) = a 3-oxoacyl-CoA + CO2 + CoA. It functions in the pathway lipid metabolism; fatty acid biosynthesis. Functionally, involved in the synthesis of fatty acids. Elongates C4 fatty acids. Required for the normal mitochondrial function, energy metabolism and growth of epimastigotes. In Trypanosoma cruzi (strain CL Brener), this protein is Fatty acid elongase 1.